Reading from the N-terminus, the 369-residue chain is Allantoicase (369 aa).

The interval 341–369 (PDSKNNNNNNNNNNNNNTSNSFKTSDRQQ) is disordered. Residues 345–357 (NNNNNNNNNNNNN) show a composition bias toward low complexity.

The protein belongs to the allantoicase family.

It catalyses the reaction allantoate + H2O = (S)-ureidoglycolate + urea. The protein operates within nitrogen metabolism; (S)-allantoin degradation; (S)-ureidoglycolate from allantoate (aminidohydrolase route): step 1/1. In terms of biological role, utilization of purines as secondary nitrogen sources, when primary sources are limiting. The chain is Allantoicase (allC) from Dictyostelium discoideum (Social amoeba).